The following is a 721-amino-acid chain: Glucans biosynthesis glucosyltransferase H (721 aa).

The next 7 membrane-spanning stretches (helical) occupy residues 54-74 (LIMVATAVLSAAGIYEMYQVL), 85-105 (VVLVLFAALFAWVALSFVSAL), 404-424 (GIGAYLTAPMWLAFLVAGILI), 458-478 (FAGTMGLLILPKLLALLLVLI), 493-513 (FGGVLLETMISALTAPVMMVF), 548-568 (YALPTALGATMAVGAWLVSWP), and 569-589 (LLLWMTPVIVGLLLAIPVALL).

It belongs to the glycosyltransferase 2 family. OpgH subfamily.

The protein resides in the cell inner membrane. Its pathway is glycan metabolism; osmoregulated periplasmic glucan (OPG) biosynthesis. Its function is as follows. Involved in the biosynthesis of osmoregulated periplasmic glucans (OPGs). In Rhodopseudomonas palustris (strain TIE-1), this protein is Glucans biosynthesis glucosyltransferase H.